A 458-amino-acid polypeptide reads, in one-letter code: Bifunctional protein GlmU (458 aa).

Positions 1-224 (MTVIALAAGK…PKVAVGVNNQ (224 aa)) are pyrophosphorylase. UDP-N-acetyl-alpha-D-glucosamine-binding positions include 6–9 (LAAG), lysine 20, glutamine 71, and 76–77 (GT). Residue aspartate 99 participates in Mg(2+) binding. Residues glycine 136, glutamate 150, asparagine 165, and asparagine 222 each coordinate UDP-N-acetyl-alpha-D-glucosamine. Asparagine 222 contacts Mg(2+). Positions 225-245 (LELARATRLLFKRKALRLMED) are linker. The N-acetyltransferase stretch occupies residues 246 to 458 (GVLMIDPRTV…TAETEEKEQV (213 aa)). UDP-N-acetyl-alpha-D-glucosamine is bound by residues arginine 328 and lysine 346. The active-site Proton acceptor is the histidine 358. Residues tyrosine 361 and asparagine 372 each coordinate UDP-N-acetyl-alpha-D-glucosamine. Acetyl-CoA-binding positions include 381-382 (NY), serine 401, serine 419, and arginine 436.

This sequence in the N-terminal section; belongs to the N-acetylglucosamine-1-phosphate uridyltransferase family. It in the C-terminal section; belongs to the transferase hexapeptide repeat family. Homotrimer. Mg(2+) is required as a cofactor.

The protein resides in the cytoplasm. The catalysed reaction is alpha-D-glucosamine 1-phosphate + acetyl-CoA = N-acetyl-alpha-D-glucosamine 1-phosphate + CoA + H(+). It catalyses the reaction N-acetyl-alpha-D-glucosamine 1-phosphate + UTP + H(+) = UDP-N-acetyl-alpha-D-glucosamine + diphosphate. It participates in nucleotide-sugar biosynthesis; UDP-N-acetyl-alpha-D-glucosamine biosynthesis; N-acetyl-alpha-D-glucosamine 1-phosphate from alpha-D-glucosamine 6-phosphate (route II): step 2/2. It functions in the pathway nucleotide-sugar biosynthesis; UDP-N-acetyl-alpha-D-glucosamine biosynthesis; UDP-N-acetyl-alpha-D-glucosamine from N-acetyl-alpha-D-glucosamine 1-phosphate: step 1/1. The protein operates within bacterial outer membrane biogenesis; LPS lipid A biosynthesis. Functionally, catalyzes the last two sequential reactions in the de novo biosynthetic pathway for UDP-N-acetylglucosamine (UDP-GlcNAc). The C-terminal domain catalyzes the transfer of acetyl group from acetyl coenzyme A to glucosamine-1-phosphate (GlcN-1-P) to produce N-acetylglucosamine-1-phosphate (GlcNAc-1-P), which is converted into UDP-GlcNAc by the transfer of uridine 5-monophosphate (from uridine 5-triphosphate), a reaction catalyzed by the N-terminal domain. This is Bifunctional protein GlmU from Bdellovibrio bacteriovorus (strain ATCC 15356 / DSM 50701 / NCIMB 9529 / HD100).